The sequence spans 245 residues: Carboxy-S-adenosyl-L-methionine synthase (245 aa).

S-adenosyl-L-methionine is bound by residues Tyr-42, 67–69 (GCS), 92–93 (DN), 120–121 (DI), Asn-135, and Arg-202.

It belongs to the class I-like SAM-binding methyltransferase superfamily. Cx-SAM synthase family. Homodimer.

It carries out the reaction prephenate + S-adenosyl-L-methionine = carboxy-S-adenosyl-L-methionine + 3-phenylpyruvate + H2O. Its function is as follows. Catalyzes the conversion of S-adenosyl-L-methionine (SAM) to carboxy-S-adenosyl-L-methionine (Cx-SAM). The chain is Carboxy-S-adenosyl-L-methionine synthase from Vibrio campbellii (strain ATCC BAA-1116).